Consider the following 578-residue polypeptide: Protein BONZAI 1 (578 aa).

A lipid anchor (N-myristoyl glycine) is attached at glycine 2. C2 domains are found at residues 26-163 (ALGA…TSTL) and 176-303 (QPHH…NFSL). Ca(2+)-binding residues include aspartate 63, aspartate 69, aspartate 122, and aspartate 124. Residues 341–560 (NFMVAIDFTA…SVVQALLAEL (220 aa)) form the VWFA domain.

The protein belongs to the copine family. As to quaternary structure, interacts (via VWA domain) with BAP1 and BAP2. Interacts with HSP70-1 and HSP70-2. Ca(2+) serves as cofactor. Based on mass spectrometry analysis, the N-peptide must be modified and there might be additional modifications other than myristoylation. In terms of tissue distribution, expressed in roots and flowers and, at higher levels, in leaves and stems. Strongly expressed in growing tissues. Not detected in green siliques.

The protein localises to the cell membrane. Functionally, negative regulator of cell death and defense responses. Negative regulator of several R genes, including SNC1. May have effects in promoting growth and development. May function in membrane trafficking and in fusion of vesicles with plasma membrane at low temperature. Exhibits calcium-dependent phospholipid binding properties. The protein is Protein BONZAI 1 (BON1) of Arabidopsis thaliana (Mouse-ear cress).